We begin with the raw amino-acid sequence, 359 residues long: Ribosomal RNA large subunit methyltransferase M (359 aa).

S-adenosyl-L-methionine is bound by residues Ser-186, 219 to 222 (CPGG), Asp-238, Asp-258, and Asp-275. The active-site Proton acceptor is the Lys-304.

This sequence belongs to the class I-like SAM-binding methyltransferase superfamily. RNA methyltransferase RlmE family. RlmM subfamily. Monomer.

The protein resides in the cytoplasm. The enzyme catalyses cytidine(2498) in 23S rRNA + S-adenosyl-L-methionine = 2'-O-methylcytidine(2498) in 23S rRNA + S-adenosyl-L-homocysteine + H(+). Functionally, catalyzes the 2'-O-methylation at nucleotide C2498 in 23S rRNA. The chain is Ribosomal RNA large subunit methyltransferase M from Aliivibrio fischeri (strain MJ11) (Vibrio fischeri).